A 207-amino-acid polypeptide reads, in one-letter code: Phosphoserine phosphatase (207 aa).

Asp8 functions as the Nucleophile in the catalytic mechanism. Residues Asp8 and Asp10 each contribute to the Mg(2+) site. The active-site Proton donor is Asp10. Residues Glu17, Arg53, 96 to 97 (SG), and Lys141 contribute to the substrate site. Mg(2+) is bound at residue Asp164. Position 167 (Asn167) interacts with substrate.

It belongs to the HAD-like hydrolase superfamily. SerB family. The cofactor is Mg(2+).

It catalyses the reaction O-phospho-L-serine + H2O = L-serine + phosphate. The catalysed reaction is O-phospho-D-serine + H2O = D-serine + phosphate. It participates in amino-acid biosynthesis; L-serine biosynthesis; L-serine from 3-phospho-D-glycerate: step 3/3. This chain is Phosphoserine phosphatase, found in Campylobacter jejuni subsp. doylei (strain ATCC BAA-1458 / RM4099 / 269.97).